A 475-amino-acid chain; its full sequence is UDP-glycosyltransferase 101 (475 aa).

His15 functions as the Proton acceptor in the catalytic mechanism. Position 15 (His15) interacts with an anthocyanidin. Asp117 acts as the Charge relay in catalysis. Residues Ala345, Gln347, His362, Trp365, Asn366, Ser367, and Glu370 each coordinate UDP-alpha-D-glucose. Residue Gly385 participates in an anthocyanidin binding. 2 residues coordinate UDP-alpha-D-glucose: Glu386 and Gln387.

The protein belongs to the UDP-glycosyltransferase family.

It catalyses the reaction (20S)-protopanaxadiol + UDP-alpha-D-glucose = (20S)-ginsenoside C-K + UDP + H(+). The enzyme catalyses (20S)-ginsenoside Rg3 + UDP-alpha-D-glucose = (20S)-ginsenoside Rd + UDP + H(+). The catalysed reaction is (20S)-protopanaxatriol + UDP-alpha-D-glucose = (20S)-ginsenoside F1 + UDP + H(+). It carries out the reaction (20S)-ginsenoside F1 + UDP-alpha-D-glucose = (20S)-ginsenoside Rg1 + UDP + H(+). The protein operates within secondary metabolite biosynthesis; terpenoid biosynthesis. Functionally, component of the dammarane-type triterpene saponins (e.g. ginsenosides or panaxosides) biosynthetic pathway. Glycosyltransferase that catalyzes the biosynthesis of ginsenoside F1 from protopanaxatriol (PPT) and the conversion of ginsenoside F1 to ginsenoside Rg1. Triggers C20-OH glycosylation of ginsenoside Rg3 to produce ginsenoside Rd. Mediates the conversion of protopanaxadiol (PPD) to the ginsenoside compound K. This chain is UDP-glycosyltransferase 101, found in Panax ginseng (Korean ginseng).